A 424-amino-acid chain; its full sequence is Glutamate-1-semialdehyde 2,1-aminomutase (424 aa).

Lys263 is modified (N6-(pyridoxal phosphate)lysine).

It belongs to the class-III pyridoxal-phosphate-dependent aminotransferase family. HemL subfamily. As to quaternary structure, homodimer. Requires pyridoxal 5'-phosphate as cofactor.

The protein localises to the cytoplasm. The catalysed reaction is (S)-4-amino-5-oxopentanoate = 5-aminolevulinate. It participates in porphyrin-containing compound metabolism; protoporphyrin-IX biosynthesis; 5-aminolevulinate from L-glutamyl-tRNA(Glu): step 2/2. The chain is Glutamate-1-semialdehyde 2,1-aminomutase from Campylobacter jejuni subsp. jejuni serotype O:23/36 (strain 81-176).